A 250-amino-acid chain; its full sequence is Probable replication-associated protein repA2 (250 aa).

Belongs to the IncFII RepA family.

Functionally, this protein is essential for plasmid replication; it is involved in copy control functions. In Buchnera aphidicola subsp. Schizaphis graminum (strain Sg), this protein is Probable replication-associated protein repA2 (repA2).